The primary structure comprises 884 residues: Telomerase reverse transcriptase (884 aa).

One can recognise a Reverse transcriptase domain in the interval 422–725; that stretch reads CRNHNSYTLS…TVIQFCAMHI (304 aa). Residues Asp-530, Asp-670, and Asp-671 each coordinate Mg(2+).

Belongs to the reverse transcriptase family. Telomerase subfamily. As to quaternary structure, catalytic subunit of the telomerase holoenzyme complex composed minimally of EST2 and the telomerase RNA template component.

Its subcellular location is the nucleus. The protein localises to the chromosome. It is found in the telomere. The enzyme catalyses DNA(n) + a 2'-deoxyribonucleoside 5'-triphosphate = DNA(n+1) + diphosphate. Functionally, telomerase is a ribonucleoprotein enzyme essential for the replication of chromosome termini in most eukaryotes. It elongates telomeres. It is a reverse transcriptase that adds simple sequence repeats to chromosome ends by copying a template sequence within the RNA component of the enzyme. The sequence is that of Telomerase reverse transcriptase (EST2) from Saccharomyces cerevisiae (strain ATCC 204508 / S288c) (Baker's yeast).